We begin with the raw amino-acid sequence, 472 residues long: Uronate isomerase (472 aa).

This sequence belongs to the metallo-dependent hydrolases superfamily. Uronate isomerase family.

It carries out the reaction D-glucuronate = D-fructuronate. The catalysed reaction is aldehydo-D-galacturonate = keto-D-tagaturonate. It functions in the pathway carbohydrate metabolism; pentose and glucuronate interconversion. The sequence is that of Uronate isomerase from Xanthomonas oryzae pv. oryzae (strain MAFF 311018).